An 87-amino-acid polypeptide reads, in one-letter code: Protein anon-73B1 (87 aa).

A helical transmembrane segment spans residues 25-47 (LLIRYGLYVGALFQFVCISAAVL). Positions 50-87 (NNPDSQSNPETGEVTEREGEPVRTRLHKIRKLEKKKRR) are disordered. A compositionally biased stretch (basic and acidic residues) spans 63-72 (VTEREGEPVR). The segment covering 73 to 87 (TRLHKIRKLEKKKRR) has biased composition (basic residues).

Belongs to the UPF0239 family.

The protein resides in the membrane. The sequence is that of Protein anon-73B1 (anon-73B1) from Drosophila simulans (Fruit fly).